The sequence spans 365 residues: MQLEIQVALNFIISYLYNKLPRRRVNIFGEELERLLKQKYEGHWYPEKPYKGSGFRCIHVGEKVDPVIEQASKESGLDIDDVRGNLPQDLSVWIDPFEVSYQIGEKGPVKVLYVDDSNENGCELDKEIKNSFNPEAQVFMPISDPASSVSSSPSPPFGHSAAVSPTFMPRSTQPLTFTTATFAATKFGSTKMKNSGRSSKVARTSPISLGLNVNVNDLLKQKAISSSMHSLYGLGLGSQQQPQPQPQQPPSQPPPPPPPPQQQQQHQQQQQQQQQQQQQPQQQTSALSPNAKEFIFPNMQGQGSSTNGMFPGDSPLNLSPLQYSNAFNVFAAYGGLNEKSFVDGLNFSLNNIQYSNQQFQPVMAN.

A Bipartite nuclear localization signal motif is present at residues 22–39 (RRRVNIFGEELERLLKQK). An important for nuclear localization region spans residues 82–92 (VRGNLPQDLSV). Residues 144 to 160 (DPASSVSSSPSPPFGHS) show a composition bias toward low complexity. A disordered region spans residues 144-171 (DPASSVSSSPSPPFGHSAAVSPTFMPRS). A required for interaction with CPEB3 region spans residues 161–220 (AAVSPTFMPRSTQPLTFTTATFAATKFGSTKMKNSGRSSKVARTSPISLGLNVNVNDLLK). Thr204 carries the post-translational modification Phosphothreonine. A Nuclear export signal motif is present at residues 228–236 (MHSLYGLGL). A disordered region spans residues 233–287 (GLGLGSQQQPQPQPQQPPSQPPPPPPPPQQQQQHQQQQQQQQQQQQQPQQQTSAL). Over residues 243-261 (QPQPQQPPSQPPPPPPPPQ) the composition is skewed to pro residues. Residues 262–283 (QQQQHQQQQQQQQQQQQQPQQQ) show a composition bias toward low complexity.

The protein belongs to the BTG family. Interacts with ERBB2. Interacts with CNOT7. Interacts with CPEB3 (via C-terminal RNA-binding region); recruits CNOT7 to CPEB3 to form a ternary complex required for mRNA deadenylation and decay. Interacts with CNOT8. Interacts with CPEB4. Phosphorylated on Ser and Thr residues.

It localises to the cytoplasm. Its subcellular location is the nucleus. In terms of biological role, anti-proliferative protein; the function is mediated by association with deadenylase subunits of the CCR4-NOT complex. Mediates CPEB3-accelerated mRNA deadenylation by binding to CPEB3 and recruiting CNOT7 which leads to target mRNA deadenylation and decay. The chain is Protein Tob1 (Tob1) from Rattus norvegicus (Rat).